The chain runs to 376 residues: Transforming growth factor beta-1 proprotein (376 aa).

An N-terminal signal peptide occupies residues 1–22 (MRVESLLLALQCLLGFVHYSGA). A straightjacket domain region spans residues 23–68 (LSTCSPLDLELIKRKRIEAIRGQILSKLRLSKEPEVDEEKESQNIP). The arm domain stretch occupies residues 69–258 (AELISVYNST…SLPLDGNNSS (190 aa)). Residues Asn-76, Asn-125, and Asn-167 are each glycosylated (N-linked (GlcNAc...) asparagine). A bowtie tail region spans residues 214–238 (DPQKTFQLKIPGLVLVRGDTETLAV). A Cell attachment site motif is present at residues 230-232 (RGD). Intrachain disulfides connect Cys-272–Cys-280, Cys-308–Cys-373, and Cys-312–Cys-375.

This sequence belongs to the TGF-beta family. In terms of assembly, latency-associated peptide: Homodimer; disulfide-linked. Latency-associated peptide: Interacts with Transforming growth factor beta-1 (TGF-beta-1) chain; interaction is non-covalent and maintains (TGF-beta-1) in a latent state; each Latency-associated peptide (LAP) monomer interacts with TGF-beta-1 in the other monomer. Transforming growth factor beta-1: Homodimer; disulfide-linked. Transforming growth factor beta-1: Interacts with TGF-beta receptors (tgfbr1 and tgfbr2), leading to signal transduction. Interacts with EFEMP2. Post-translationally, transforming growth factor beta-1 proprotein: The precursor proprotein is cleaved in the Golgi apparatus to form Transforming growth factor beta-1 (TGF-beta-1) and Latency-associated peptide (LAP) chains, which remain non-covalently linked, rendering TGF-beta-1 inactive.

It localises to the secreted. The protein resides in the extracellular space. Its subcellular location is the extracellular matrix. Functionally, transforming growth factor beta-1 proprotein: Precursor of the Latency-associated peptide (LAP) and Transforming growth factor beta-1 (TGF-beta-1) chains, which constitute the regulatory and active subunit of TGF-beta-1, respectively. Required to maintain the Transforming growth factor beta-1 (TGF-beta-1) chain in a latent state during storage in extracellular matrix. Associates non-covalently with TGF-beta-1 and regulates its activation via interaction with 'milieu molecules', such as LTBP1, LRRC32/GARP and LRRC33/NRROS, that control activation of TGF-beta-1. Interaction with integrins (ITGAV:ITGB6 or ITGAV:ITGB8) results in distortion of the Latency-associated peptide chain and subsequent release of the active TGF-beta-1. In terms of biological role, transforming growth factor beta-1: Multifunctional protein that regulates the growth and differentiation of various cell types and is involved in various processes, such as normal development, immune function, microglia function and responses to neurodegeneration. Activation into mature form follows different steps: following cleavage of the proprotein in the Golgi apparatus, Latency-associated peptide (LAP) and Transforming growth factor beta-1 (TGF-beta-1) chains remain non-covalently linked rendering TGF-beta-1 inactive during storage in extracellular matrix. At the same time, LAP chain interacts with 'milieu molecules', such as ltbp1, lrrc32/garp and lrrc33/nrros that control activation of TGF-beta-1 and maintain it in a latent state during storage in extracellular milieus. TGF-beta-1 is released from LAP by integrins (ITGAV:ITGB6 or ITGAV:ITGB8): integrin-binding to LAP stabilizes an alternative conformation of the LAP bowtie tail and results in distortion of the LAP chain and subsequent release of the active TGF-beta-1. Once activated following release of LAP, TGF-beta-1 acts by binding to TGF-beta receptors (tgfbr1 and tgfbr2), which transduce signal. While expressed by many cells types, TGF-beta-1 only has a very localized range of action within cell environment thanks to fine regulation of its activation by Latency-associated peptide chain (LAP) and 'milieu molecules'. Plays an important role in bone remodeling: acts as a potent stimulator of osteoblastic bone formation. Can promote either T-helper 17 cells (Th17) or regulatory T-cells (Treg) lineage differentiation in a concentration-dependent manner. Can induce epithelial-to-mesenchymal transition (EMT) and cell migration in various cell types. This chain is Transforming growth factor beta-1 proprotein (tgfb1), found in Cyprinus carpio (Common carp).